The following is a 332-amino-acid chain: 4-hydroxy-3-methylbut-2-enyl diphosphate reductase (332 aa).

A [4Fe-4S] cluster-binding site is contributed by Cys34. Positions 63 and 96 each coordinate (2E)-4-hydroxy-3-methylbut-2-enyl diphosphate. His63 and His96 together coordinate dimethylallyl diphosphate. Isopentenyl diphosphate-binding residues include His63 and His96. A [4Fe-4S] cluster-binding site is contributed by Cys118. Residue His146 coordinates (2E)-4-hydroxy-3-methylbut-2-enyl diphosphate. A dimethylallyl diphosphate-binding site is contributed by His146. Residue His146 participates in isopentenyl diphosphate binding. The active-site Proton donor is Glu148. Residue Thr186 coordinates (2E)-4-hydroxy-3-methylbut-2-enyl diphosphate. Cys216 lines the [4Fe-4S] cluster pocket. 4 residues coordinate (2E)-4-hydroxy-3-methylbut-2-enyl diphosphate: Ser244, Ser245, Asn246, and Ser289. Ser244, Ser245, Asn246, and Ser289 together coordinate dimethylallyl diphosphate. Isopentenyl diphosphate-binding residues include Ser244, Ser245, Asn246, and Ser289.

This sequence belongs to the IspH family. The cofactor is [4Fe-4S] cluster.

The enzyme catalyses isopentenyl diphosphate + 2 oxidized [2Fe-2S]-[ferredoxin] + H2O = (2E)-4-hydroxy-3-methylbut-2-enyl diphosphate + 2 reduced [2Fe-2S]-[ferredoxin] + 2 H(+). It carries out the reaction dimethylallyl diphosphate + 2 oxidized [2Fe-2S]-[ferredoxin] + H2O = (2E)-4-hydroxy-3-methylbut-2-enyl diphosphate + 2 reduced [2Fe-2S]-[ferredoxin] + 2 H(+). Its pathway is isoprenoid biosynthesis; dimethylallyl diphosphate biosynthesis; dimethylallyl diphosphate from (2E)-4-hydroxy-3-methylbutenyl diphosphate: step 1/1. It functions in the pathway isoprenoid biosynthesis; isopentenyl diphosphate biosynthesis via DXP pathway; isopentenyl diphosphate from 1-deoxy-D-xylulose 5-phosphate: step 6/6. Functionally, catalyzes the conversion of 1-hydroxy-2-methyl-2-(E)-butenyl 4-diphosphate (HMBPP) into a mixture of isopentenyl diphosphate (IPP) and dimethylallyl diphosphate (DMAPP). Acts in the terminal step of the DOXP/MEP pathway for isoprenoid precursor biosynthesis. The polypeptide is 4-hydroxy-3-methylbut-2-enyl diphosphate reductase (Mycobacterium leprae (strain TN)).